We begin with the raw amino-acid sequence, 448 residues long: tRNA-2-methylthio-N(6)-dimethylallyladenosine synthase (448 aa).

One can recognise an MTTase N-terminal domain in the interval 2–120 (KKYRIIVFGC…LPELIGKVIE (119 aa)). [4Fe-4S] cluster is bound by residues C11, C47, C81, C158, C162, and C165. Residues 144–374 (RKEGVRAWVT…IKLQNKISLE (231 aa)) enclose the Radical SAM core domain. The TRAM domain occupies 377-440 (EEEVGQTQEV…LAHLTGILSY (64 aa)).

Belongs to the methylthiotransferase family. MiaB subfamily. In terms of assembly, monomer. The cofactor is [4Fe-4S] cluster.

It is found in the cytoplasm. It catalyses the reaction N(6)-dimethylallyladenosine(37) in tRNA + (sulfur carrier)-SH + AH2 + 2 S-adenosyl-L-methionine = 2-methylsulfanyl-N(6)-dimethylallyladenosine(37) in tRNA + (sulfur carrier)-H + 5'-deoxyadenosine + L-methionine + A + S-adenosyl-L-homocysteine + 2 H(+). In terms of biological role, catalyzes the methylthiolation of N6-(dimethylallyl)adenosine (i(6)A), leading to the formation of 2-methylthio-N6-(dimethylallyl)adenosine (ms(2)i(6)A) at position 37 in tRNAs that read codons beginning with uridine. The sequence is that of tRNA-2-methylthio-N(6)-dimethylallyladenosine synthase from Pelotomaculum thermopropionicum (strain DSM 13744 / JCM 10971 / SI).